Consider the following 262-residue polypeptide: Snake venom serine protease catroxase-1 (262 aa).

A signal peptide spans Met-1–Ala-18. Residues Gln-19–Pro-24 constitute a propeptide that is removed on maturation. The Peptidase S1 domain occupies Ile-25–Ala-250. Disulfide bonds link Cys-31–Cys-162, Cys-49–Cys-65, Cys-97–Cys-257, Cys-141–Cys-211, Cys-173–Cys-190, and Cys-201–Cys-226. The Charge relay system role is filled by His-64. N-linked (GlcNAc...) asparagine glycosylation occurs at Asn-102. The active-site Charge relay system is the Asp-109. Asn-169 carries an N-linked (GlcNAc...) asparagine glycan. Ser-205 acts as the Charge relay system in catalysis.

It belongs to the peptidase S1 family. Snake venom subfamily. As to quaternary structure, monomer. In terms of tissue distribution, expressed by the venom gland.

It is found in the secreted. Its function is as follows. Snake venom serine protease that may act in the hemostasis system of the prey. The sequence is that of Snake venom serine protease catroxase-1 from Crotalus atrox (Western diamondback rattlesnake).